We begin with the raw amino-acid sequence, 334 residues long: Putative binding protein YtlA (334 aa).

The first 23 residues, Met-1–Ala-23, serve as a signal peptide directing secretion. Residue Cys-24 is the site of N-palmitoyl cysteine attachment. A lipid anchor (S-diacylglycerol cysteine) is attached at Cys-24.

This sequence belongs to the bacterial solute-binding protein SsuA/TauA family.

Its subcellular location is the cell membrane. The chain is Putative binding protein YtlA (ytlA) from Bacillus subtilis (strain 168).